Here is a 497-residue protein sequence, read N- to C-terminus: MEKKYILALDQGTTSSRAMIIDEEGEVIGVAQEEFDQIFPKPGWVEHNANEIWASILAVIAGVLLKTNISSKEIAGIGITNQRETTVIWDKESGNPIYNAIVWQSRQTEDICKQLRKDGYEDTIRSKTGLLIDPYFAGTKARWILDHVDGAQERAEKGELLFGTIDTWLVWKLTGGRAHITDYSNASRTLLYNIYDLEWDDELLKMLNIPKAMLPEVRPSSEVYADTVPYHFFGEEVPVAGIAGDQQAALFGQGCFEKGMAKNTYGTGCFLLMNTGEKAVRSENGLLTTLAWGIDGKVEYALEGSIFVAGSAIQWLRDGLRMVRQSSDSENYASRIESSDGVYVVPAFVGLGAPYWDSDVRGAVFGLTRGTEKEQFIRATLESLAYQTRDVLYAMEQDSGISLKTLRVDGGASANNFLMQFQSDILGVPVERPENKETTVLGAAFLAGLAVGVWKDKNEIKKHWKLDKRFEVEMKEEQREDLYEGWHKAVKAAQAFK.

Thr-13 contacts ADP. ATP is bound by residues Thr-13, Thr-14, and Ser-15. A sn-glycerol 3-phosphate-binding site is contributed by Thr-13. Arg-17 is an ADP binding site. Sn-glycerol 3-phosphate is bound by residues Arg-83, Glu-84, and Tyr-135. Residues Arg-83, Glu-84, and Tyr-135 each contribute to the glycerol site. Position 231 is a phosphohistidine; by HPr (His-231). Residue Asp-245 coordinates sn-glycerol 3-phosphate. Glycerol contacts are provided by Asp-245 and Gln-246. ADP is bound by residues Thr-267 and Gly-310. ATP is bound by residues Thr-267, Gly-310, Gln-314, and Gly-411. Gly-411 and Asn-415 together coordinate ADP.

This sequence belongs to the FGGY kinase family. Homotetramer and homodimer (in equilibrium). In terms of processing, the phosphoenolpyruvate-dependent sugar phosphotransferase system (PTS), including enzyme I, and histidine-containing protein (HPr) are required for the phosphorylation, which leads to the activation of the enzyme.

It catalyses the reaction glycerol + ATP = sn-glycerol 3-phosphate + ADP + H(+). The protein operates within polyol metabolism; glycerol degradation via glycerol kinase pathway; sn-glycerol 3-phosphate from glycerol: step 1/1. Its activity is regulated as follows. Activated by phosphorylation and inhibited by fructose 1,6-bisphosphate (FBP). In terms of biological role, key enzyme in the regulation of glycerol uptake and metabolism. Catalyzes the phosphorylation of glycerol to yield sn-glycerol 3-phosphate. The protein is Glycerol kinase of Listeria monocytogenes serovar 1/2a (strain ATCC BAA-679 / EGD-e).